A 286-amino-acid polypeptide reads, in one-letter code: B3 domain-containing protein REM20 (286 aa).

Positions 9-102 (PRFFKVFLVE…TFEVSVFDRW (94 aa)) form a DNA-binding region, TF-B3. Residues 117–161 (SDSDSDSVVEDEKDSTDVVEDDDDEDEDEDEDDDGSFDEDEEISQ) are disordered. A compositionally biased stretch (acidic residues) spans 119–159 (SDSDSVVEDEKDSTDVVEDDDDEDEDEDEDDDGSFDEDEEI).

It localises to the nucleus. The protein is B3 domain-containing protein REM20 (REM20) of Arabidopsis thaliana (Mouse-ear cress).